The chain runs to 314 residues: Epithelial-stromal interaction protein 1 (314 aa).

3 disordered regions span residues 1 to 72, 227 to 272, and 289 to 314; these read MYTR…PNES, WAGS…RAQI, and QGKS…SWGL. The span at 18–30 shows a compositional bias: basic and acidic residues; that stretch reads SRDHAGAGQRREL. At Ser39 the chain carries Phosphoserine. Residues 71 to 180 are a coiled coil; the sequence is ESRRQKIQRI…QEDIRRATFR (110 aa). Over residues 232–272 the composition is skewed to basic and acidic residues; that stretch reads AHRDSPQKEDNPRLQKTRDGHQKNKLLETKGQHQEEERAQI. Residues 305–314 are compositionally biased toward polar residues; the sequence is NMNSTDSWGL.

Expressed in the spleen, with expression in T cells, B cells, natural killer cells and natural killer T cells and high expression in monocytes and macrophages.

Functionally, plays a role in M1 macrophage polarization and is required for the proper regulation of gene expression during M1 versus M2 macrophage differentiation. Might play a role in RELA/p65 and STAT1 phosphorylation and nuclear localization upon activation of macrophages. This Mus musculus (Mouse) protein is Epithelial-stromal interaction protein 1 (Epsti1).